Reading from the N-terminus, the 214-residue chain is Adenylate kinase (214 aa).

Residue 10–15 coordinates ATP; the sequence is GAGKGT. The tract at residues 30 to 59 is NMP; sequence STGDMFRDHKARGTEIGKQVQAIMDAGGLV. AMP-binding positions include Thr31, Arg36, 57–59, 85–88, and Gln92; these read GLV and GYPR. Residues 126–163 are LID; the sequence is GRRSCPRCGAVYHVSQNPPHRAGFCDRDDAALVQREDD. Arg127 contributes to the ATP binding site. 2 residues coordinate Zn(2+): Cys130 and Cys133. 136 to 137 lines the ATP pocket; that stretch reads VY. Zn(2+) contacts are provided by Cys150 and Asp153. AMP-binding residues include Arg160 and Arg171. ATP is bound at residue Gly199.

This sequence belongs to the adenylate kinase family. In terms of assembly, monomer.

Its subcellular location is the cytoplasm. The catalysed reaction is AMP + ATP = 2 ADP. The protein operates within purine metabolism; AMP biosynthesis via salvage pathway; AMP from ADP: step 1/1. Catalyzes the reversible transfer of the terminal phosphate group between ATP and AMP. Plays an important role in cellular energy homeostasis and in adenine nucleotide metabolism. This chain is Adenylate kinase, found in Anaeromyxobacter dehalogenans (strain 2CP-1 / ATCC BAA-258).